The sequence spans 1531 residues: DNA topoisomerase 2-alpha (1531 aa).

Methionine 1 is subject to N-acetylmethionine. Residue serine 4 is modified to Phosphoserine. Lysine 17 participates in a covalent cross-link: Glycyl lysine isopeptide (Lys-Gly) (interchain with G-Cter in SUMO2). ATP contacts are provided by residues asparagine 91, asparagine 120, and 148–150 (SSN). Residues lysine 156 and lysine 157 each participate in a glycyl lysine isopeptide (Lys-Gly) (interchain with G-Cter in SUMO2) cross-link. ATP is bound at residue 161-168 (GRNGYGAK). Lysine 261 participates in a covalent cross-link: Glycyl lysine isopeptide (Lys-Gly) (interchain with G-Cter in SUMO2). The residue at position 282 (threonine 282) is a Phosphothreonine. The segment at 342 to 344 (KKK) is interaction with DNA. A Glycyl lysine isopeptide (Lys-Gly) (interchain with G-Cter in SUMO2) cross-link involves residue lysine 352. 376–378 (QTK) lines the ATP pocket. Residues lysine 386, lysine 397, lysine 416, lysine 418, lysine 425, and lysine 440 each participate in a glycyl lysine isopeptide (Lys-Gly) (interchain with G-Cter in SUMO2) cross-link. Residues 455-572 (CTLILTEGDS…SLLRHRFLEE (118 aa)) enclose the Toprim domain. Glutamate 461 provides a ligand contact to Mg(2+). Glycyl lysine isopeptide (Lys-Gly) (interchain with G-Cter in SUMO2) cross-links involve residues lysine 466, lysine 480, and lysine 529. Mg(2+)-binding residues include aspartate 541 and aspartate 543. Glycyl lysine isopeptide (Lys-Gly) (interchain with G-Cter in SUMO2) cross-links involve residues lysine 584, lysine 599, lysine 614, lysine 622, lysine 625, lysine 632, lysine 639, lysine 655, lysine 662, and lysine 676. The Topo IIA-type catalytic domain maps to 715 to 1171 (IPSMVDGLKP…SPSDLWKEDL (457 aa)). Tyrosine 805 serves as the catalytic O-(5'-phospho-DNA)-tyrosine intermediate. The interval 990–999 (KLQTSLTCNS) is interaction with DNA. The Nuclear export signal signature appears at 1018-1028 (ILRDFFELRLK). Lysine 1075 is covalently cross-linked (Glycyl lysine isopeptide (Lys-Gly) (interchain with G-Cter in SUMO2)). Disordered stretches follow at residues 1090–1123 (WKEA…DSGP) and 1184–1531 (KEKQ…DDLF). The segment covering 1099–1108 (DEEENEESDN) has biased composition (acidic residues). Serine 1106 carries the phosphoserine; by CK1 modification. Glycyl lysine isopeptide (Lys-Gly) (interchain with G-Cter in SUMO2) cross-links involve residues lysine 1114, lysine 1196, and lysine 1204. Threonine 1205 bears the Phosphothreonine mark. Serine 1213 bears the Phosphoserine mark. Residue lysine 1228 forms a Glycyl lysine isopeptide (Lys-Gly) (interchain with G-Cter in SUMO2) linkage. A Glycyl lysine isopeptide (Lys-Gly) (interchain with G-Cter in SUMO1); alternate cross-link involves residue lysine 1240. Lysine 1240 participates in a covalent cross-link: Glycyl lysine isopeptide (Lys-Gly) (interchain with G-Cter in SUMO2); alternate. At threonine 1244 the chain carries Phosphothreonine. Serine 1247 is subject to Phosphoserine. Over residues 1256–1272 (EGLKQRLEKKQKREPGT) the composition is skewed to basic and acidic residues. Glycyl lysine isopeptide (Lys-Gly) (interchain with G-Cter in SUMO2) cross-links involve residues lysine 1259, lysine 1276, lysine 1283, and lysine 1286. Residues serine 1295, serine 1297, serine 1299, and serine 1302 each carry the phosphoserine modification. A Phosphothreonine modification is found at threonine 1327. Residues 1330–1349 (LDSDEDFSDFDEKTDDEDFV) are compositionally biased toward acidic residues. 2 positions are modified to phosphoserine: serine 1332 and serine 1337. At threonine 1343 the chain carries Phosphothreonine; by PLK3. 2 positions are modified to phosphoserine: serine 1351 and serine 1354. Glycyl lysine isopeptide (Lys-Gly) (interchain with G-Cter in SUMO2) cross-links involve residues lysine 1363, lysine 1367, and lysine 1373. 2 positions are modified to phosphoserine: serine 1374 and serine 1377. A Glycyl lysine isopeptide (Lys-Gly) (interchain with G-Cter in SUMO2) cross-link involves residue lysine 1385. Phosphoserine occurs at positions 1387, 1391, 1392, and 1393. A compositionally biased stretch (low complexity) spans 1406 to 1431 (TNPVPKKNVTVKKTAAKSQSSTSTTG). A Glycyl lysine isopeptide (Lys-Gly) (interchain with G-Cter in SUMO2); alternate cross-link involves residue lysine 1422. The residue at position 1422 (lysine 1422) is an N6-acetyllysine; alternate. Residues 1433–1439 (KKRAAPK) form an interaction with PLSCR1 region. Lysine 1442 is covalently cross-linked (Glycyl lysine isopeptide (Lys-Gly) (interchain with G-Cter in SUMO2); alternate). Lysine 1442 carries the post-translational modification N6-acetyllysine; alternate. Residue serine 1449 is modified to Phosphoserine. Residues lysine 1454 and lysine 1459 each participate in a glycyl lysine isopeptide (Lys-Gly) (interchain with G-Cter in SUMO2) cross-link. Serine 1469 bears the Phosphoserine; by CK2 mark. Position 1470 is a phosphothreonine (threonine 1470). 3 positions are modified to phosphoserine: serine 1471, serine 1474, and serine 1476. Glycyl lysine isopeptide (Lys-Gly) (interchain with G-Cter in SUMO2) cross-links involve residues lysine 1484 and lysine 1492. A compositionally biased stretch (basic and acidic residues) spans 1491 to 1502 (SKGESDDFHMDF). A phosphoserine mark is found at serine 1495, serine 1504, and serine 1525.

Belongs to the type II topoisomerase family. In terms of assembly, homodimer. Interacts with COPS5. Interacts with RECQL5; this stimulates DNA decatenation. Interacts with SETMAR; stimulates the topoisomerase activity. Interacts with DHX9; this interaction occurs in a E2 enzyme UBE2I- and RNA-dependent manner, negatively regulates DHX9-mediated double-stranded DNA and RNA duplex helicase activity and stimulates TOP2A-mediated supercoiled DNA relaxation activity. Interacts with HNRNPU (via C-terminus); this interaction protects the topoisomerase TOP2A from degradation and positively regulates the relaxation of supercoiled DNA in a RNA-dependent manner. Interacts with MCM3AP isoform GANP. Interacts with ERCC6. Interacts with PLSCR1. Interacts with GCNA; this interaction allows the resolution of topoisomerase II (TOP2A) DNA-protein cross-links. Interacts with POL1RA/RPA1 (via dock II) and UBTF in the context of Pol I complex; may assist Pol I transcription initiation by releasing supercoils occurring during DNA unwinding. Interacts with TPRN; TPRN interacts with a number of DNA damage response proteins, is recruited to sites of DNA damage and may play a role in DNA damage repair. The cofactor is Mg(2+). It depends on Mn(2+) as a cofactor. Ca(2+) is required as a cofactor. In terms of processing, phosphorylation has no effect on catalytic activity. However, phosphorylation at Ser-1106 by CSNK1D/CK1 promotes DNA cleavable complex formation. Post-translationally, (Microbial infection) Deubiquitinated by Epstein-Barr virus BPLF1; leading to stabilized SUMOylated TOP2A trapped in cleavage complexes, which halts the DNA damage response to TOP2A-induced double-strand DNA breaks. SUMOylated. In terms of tissue distribution, expressed in the tonsil, spleen, lymph node, thymus, skin, pancreas, testis, colon, kidney, liver, brain and lung. Also found in high-grade lymphomas, squamous cell lung tumors and seminomas.

The protein localises to the cytoplasm. It is found in the nucleus. It localises to the nucleoplasm. Its subcellular location is the nucleolus. It carries out the reaction ATP-dependent breakage, passage and rejoining of double-stranded DNA.. With respect to regulation, specifically inhibited by the intercalating agent amsacrine. Key decatenating enzyme that alters DNA topology by binding to two double-stranded DNA molecules, generating a double-stranded break in one of the strands, passing the intact strand through the broken strand, and religating the broken strand. May play a role in regulating the period length of BMAL1 transcriptional oscillation. This is DNA topoisomerase 2-alpha (TOP2A) from Homo sapiens (Human).